The sequence spans 471 residues: Tryptophanase (471 aa).

Lys5, Lys115, and Lys156 each carry N6-acetyllysine. Lys270 carries the post-translational modification N6-(pyridoxal phosphate)lysine. Lys450 carries the N6-acetyllysine modification.

It belongs to the beta-eliminating lyase family. Homotetramer. It depends on pyridoxal 5'-phosphate as a cofactor.

It carries out the reaction L-tryptophan + H2O = indole + pyruvate + NH4(+). The protein operates within amino-acid degradation; L-tryptophan degradation via pyruvate pathway; indole and pyruvate from L-tryptophan: step 1/1. This chain is Tryptophanase (tnaA), found in Escherichia coli O157:H7.